Here is a 602-residue protein sequence, read N- to C-terminus: Cholinesterase (602 aa).

The N-terminal stretch at 1–28 (MQSKGTIISIQFLLRFLLLWVLIGKSHT) is a signal peptide. An N-linked (GlcNAc...) asparagine glycan is attached at Asn85. Cys93 and Cys120 are oxidised to a cystine. The N-linked (GlcNAc...) asparagine glycan is linked to Asn134. 144 to 145 (GG) is a binding site for substrate. Ser226 serves as the catalytic Acyl-ester intermediate. Ser226 is modified (phosphoserine). 2 N-linked (GlcNAc...) asparagine glycosylation sites follow: Asn269 and Asn284. Cys280 and Cys291 are joined by a disulfide. Glu353 functions as the Charge relay system in the catalytic mechanism. Asn369 carries N-linked (GlcNAc...) asparagine glycosylation. Cys428 and Cys547 are oxidised to a cystine. The Charge relay system role is filled by His466. N-linked (GlcNAc...) asparagine glycosylation is found at Asn483, Asn509, Asn513, and Asn514.

This sequence belongs to the type-B carboxylesterase/lipase family. Homotetramer; disulfide-linked. Dimer of dimers.

The protein resides in the secreted. It catalyses the reaction an acylcholine + H2O = a carboxylate + choline + H(+). In terms of biological role, esterase with broad substrate specificity. Contributes to the inactivation of the neurotransmitter acetylcholine. Can degrade neurotoxic organophosphate esters. The polypeptide is Cholinesterase (BCHE) (Panthera tigris tigris (Bengal tiger)).